A 102-amino-acid polypeptide reads, in one-letter code: Small ribosomal subunit protein uS10 (102 aa).

Belongs to the universal ribosomal protein uS10 family. As to quaternary structure, part of the 30S ribosomal subunit.

Its function is as follows. Involved in the binding of tRNA to the ribosomes. This is Small ribosomal subunit protein uS10 from Geobacter metallireducens (strain ATCC 53774 / DSM 7210 / GS-15).